The sequence spans 304 residues: tRNA dimethylallyltransferase (304 aa).

Residue 2-9 participates in ATP binding; the sequence is GPTASGKT. Residue 4–9 participates in substrate binding; that stretch reads TASGKT. 4 interaction with substrate tRNA regions span residues 27 to 30, 151 to 155, 232 to 237, and 265 to 272; these read DSAL, QRINR, RCVGYR, and KRQITWLR.

This sequence belongs to the IPP transferase family. As to quaternary structure, monomer. Mg(2+) is required as a cofactor.

It catalyses the reaction adenosine(37) in tRNA + dimethylallyl diphosphate = N(6)-dimethylallyladenosine(37) in tRNA + diphosphate. Catalyzes the transfer of a dimethylallyl group onto the adenine at position 37 in tRNAs that read codons beginning with uridine, leading to the formation of N6-(dimethylallyl)adenosine (i(6)A). The polypeptide is tRNA dimethylallyltransferase (Actinobacillus pleuropneumoniae serotype 5b (strain L20)).